A 410-amino-acid polypeptide reads, in one-letter code: Elongation factor Tu (410 aa).

One can recognise a tr-type G domain in the interval 10–219 (KTHVNVGTIG…ALDTYIPDPV (210 aa)). GTP-binding positions include 19–26 (GHVDHGKT), 88–92 (DCPGH), and 143–146 (NKCD). Residue T26 participates in Mg(2+) binding.

This sequence belongs to the TRAFAC class translation factor GTPase superfamily. Classic translation factor GTPase family. EF-Tu/EF-1A subfamily. Monomer.

Its subcellular location is the cytoplasm. The catalysed reaction is GTP + H2O = GDP + phosphate + H(+). Its function is as follows. GTP hydrolase that promotes the GTP-dependent binding of aminoacyl-tRNA to the A-site of ribosomes during protein biosynthesis. The polypeptide is Elongation factor Tu (Brachyspira hyodysenteriae (Treponema hyodysenteriae)).